The chain runs to 252 residues: Imidazole glycerol phosphate synthase subunit HisF (252 aa).

Residues aspartate 11 and aspartate 130 contribute to the active site.

This sequence belongs to the HisA/HisF family. In terms of assembly, heterodimer of HisH and HisF.

The protein resides in the cytoplasm. It carries out the reaction 5-[(5-phospho-1-deoxy-D-ribulos-1-ylimino)methylamino]-1-(5-phospho-beta-D-ribosyl)imidazole-4-carboxamide + L-glutamine = D-erythro-1-(imidazol-4-yl)glycerol 3-phosphate + 5-amino-1-(5-phospho-beta-D-ribosyl)imidazole-4-carboxamide + L-glutamate + H(+). The protein operates within amino-acid biosynthesis; L-histidine biosynthesis; L-histidine from 5-phospho-alpha-D-ribose 1-diphosphate: step 5/9. Its function is as follows. IGPS catalyzes the conversion of PRFAR and glutamine to IGP, AICAR and glutamate. The HisF subunit catalyzes the cyclization activity that produces IGP and AICAR from PRFAR using the ammonia provided by the HisH subunit. The protein is Imidazole glycerol phosphate synthase subunit HisF of Dictyoglomus thermophilum (strain ATCC 35947 / DSM 3960 / H-6-12).